The following is a 631-amino-acid chain: KIF-binding protein (631 aa).

The segment covering 60-70 (EQGEAGDEADC) has biased composition (acidic residues). A disordered region spans residues 60–88 (EQGEAGDEADCESSQTADGEPEDGFEKTF).

It belongs to the KIF-binding protein family. In terms of tissue distribution, at 30 hpf, primarily expressed in central and peripheral neurons.

Its subcellular location is the cytoplasm. The protein localises to the cytoskeleton. Functionally, activator of KIF1B plus-end-directed microtubule motor activity. Required for organization of axonal microtubules, and axonal outgrowth and maintenance during peripheral and central nervous system development. The protein is KIF-binding protein (kifbp) of Danio rerio (Zebrafish).